Here is a 389-residue protein sequence, read N- to C-terminus: Probable acyl-CoA dehydrogenase fadE25 (389 aa).

The protein belongs to the acyl-CoA dehydrogenase family. The cofactor is FAD.

It carries out the reaction a 2,3-saturated acyl-CoA + A = a 2,3-dehydroacyl-CoA + AH2. The protein is Probable acyl-CoA dehydrogenase fadE25 (fadE25) of Mycobacterium leprae (strain TN).